The following is a 495-amino-acid chain: WD repeat-containing protein 37 (495 aa).

Polar residues-rich tracts occupy residues 1–13 (MPTE…TARQ) and 22–31 (SLSIRRTNSS). The tract at residues 1–50 (MPTESASCSTARQTKQKRKSHSLSIRRTNSSEQERTGLPRDMLEGQDSKL) is disordered. Residues 32–47 (EQERTGLPRDMLEGQD) show a composition bias toward basic and acidic residues. WD repeat units lie at residues 154 to 194 (GHRD…CLVK) and 197 to 236 (GHVG…PTPQ). The tract at residues 237 to 266 (PVADTSQISGEDEVECSDKDEPDLDGDVSS) is disordered. Positions 246–264 (GEDEVECSDKDEPDLDGDV) are enriched in acidic residues. WD repeat units follow at residues 280–319 (SHQG…LVHS), 322–361 (GHDQ…IHSV), 366–404 (GHTD…SPIA), 407–446 (RTDS…LARL), and 453–494 (GHRR…LLQE).

In terms of assembly, forms homodimers. Interacts with PACS1. Interacts with PACS2.

Its subcellular location is the cytoplasm. The protein localises to the nucleus. Required for normal ER Ca2+ handling in lymphocytes. Together with PACS1, it plays an essential role in stabilizing peripheral lymphocyte populations. This chain is WD repeat-containing protein 37 (WDR37), found in Pongo abelii (Sumatran orangutan).